The chain runs to 355 residues: Holliday junction branch migration complex subunit RuvB (355 aa).

Residues 1 to 26 (MSIQTDDFASSSPAARRVVSTAPASP) form a disordered region. The segment at 5 to 196 (TDDFASSSPA…FGIVARLEFY (192 aa)) is large ATPase domain (RuvB-L). Over residues 9–22 (ASSSPAARRVVSTA) the composition is skewed to low complexity. Residues L35, R36, G77, K80, T81, T82, 143 to 145 (EDY), R186, Y196, and R233 each bind ATP. Position 81 (T81) interacts with Mg(2+). Residues 197 to 267 (SVEELARIVT…IADKALAMLD (71 aa)) are small ATPAse domain (RuvB-S). The tract at residues 270 to 355 (PQGFDVMDRK…TTSGSELFDA (86 aa)) is head domain (RuvB-H). Residues R325 and R330 each contribute to the DNA site.

This sequence belongs to the RuvB family. In terms of assembly, homohexamer. Forms an RuvA(8)-RuvB(12)-Holliday junction (HJ) complex. HJ DNA is sandwiched between 2 RuvA tetramers; dsDNA enters through RuvA and exits via RuvB. An RuvB hexamer assembles on each DNA strand where it exits the tetramer. Each RuvB hexamer is contacted by two RuvA subunits (via domain III) on 2 adjacent RuvB subunits; this complex drives branch migration. In the full resolvosome a probable DNA-RuvA(4)-RuvB(12)-RuvC(2) complex forms which resolves the HJ.

The protein resides in the cytoplasm. It catalyses the reaction ATP + H2O = ADP + phosphate + H(+). Its function is as follows. The RuvA-RuvB-RuvC complex processes Holliday junction (HJ) DNA during genetic recombination and DNA repair, while the RuvA-RuvB complex plays an important role in the rescue of blocked DNA replication forks via replication fork reversal (RFR). RuvA specifically binds to HJ cruciform DNA, conferring on it an open structure. The RuvB hexamer acts as an ATP-dependent pump, pulling dsDNA into and through the RuvAB complex. RuvB forms 2 homohexamers on either side of HJ DNA bound by 1 or 2 RuvA tetramers; 4 subunits per hexamer contact DNA at a time. Coordinated motions by a converter formed by DNA-disengaged RuvB subunits stimulates ATP hydrolysis and nucleotide exchange. Immobilization of the converter enables RuvB to convert the ATP-contained energy into a lever motion, pulling 2 nucleotides of DNA out of the RuvA tetramer per ATP hydrolyzed, thus driving DNA branch migration. The RuvB motors rotate together with the DNA substrate, which together with the progressing nucleotide cycle form the mechanistic basis for DNA recombination by continuous HJ branch migration. Branch migration allows RuvC to scan DNA until it finds its consensus sequence, where it cleaves and resolves cruciform DNA. This is Holliday junction branch migration complex subunit RuvB from Methylibium petroleiphilum (strain ATCC BAA-1232 / LMG 22953 / PM1).